The chain runs to 367 residues: Outer membrane porin C (367 aa).

The N-terminal stretch at 1 to 21 (MKVKVLSLLVPALLVAGAANA) is a signal peptide.

Belongs to the Gram-negative porin family. Homotrimer.

The protein localises to the cell outer membrane. Its function is as follows. Forms pores that allow passive diffusion of small molecules across the outer membrane. The chain is Outer membrane porin C (ompC) from Escherichia coli O157:H7.